The following is a 372-amino-acid chain: DNA damage-repair/toleration protein DRT100 (372 aa).

A signal peptide spans 1-26 (MRKLLASPFSSLLAVVFISVISVVRC). 9 LRR repeats span residues 136-158 (SLRI…IGKL), 160-183 (KLAV…TSLI), 184-205 (ELKH…DFGS), 208-230 (MLSR…ISGM), 232-254 (RLAD…MGNM), 256-277 (VLSL…SLLS), 280-302 (GLDV…FGSK), 304-326 (YLVS…LSSA), and 328-350 (FVGH…FPFD).

Functionally, this protein is able to complement bacterial recA mutations, but its native function in the plant is not known. The polypeptide is DNA damage-repair/toleration protein DRT100 (DRT100) (Arabidopsis thaliana (Mouse-ear cress)).